The chain runs to 140 residues: Probable glycine cleavage system H protein (140 aa).

A Lipoyl-binding domain is found at 22–114; it reads RAIIGITSYA…YEEGWIVVLE (93 aa). Lys63 is modified (N6-lipoyllysine).

It belongs to the GcvH family. As to quaternary structure, the glycine cleavage system is composed of four proteins: P, T, L and H. (R)-lipoate serves as cofactor.

Functionally, the glycine cleavage system catalyzes the degradation of glycine. The H protein shuttles the methylamine group of glycine from the P protein to the T protein. The sequence is that of Probable glycine cleavage system H protein from Korarchaeum cryptofilum (strain OPF8).